Reading from the N-terminus, the 387-residue chain is Queuine tRNA-ribosyltransferase (387 aa).

Aspartate 105 acts as the Proton acceptor in catalysis. Substrate is bound by residues 105 to 109, aspartate 177, and glycine 248; that span reads DSGGF. The RNA binding stretch occupies residues 278–284; it reads GIGDLPS. Residue aspartate 297 is the Nucleophile of the active site. Positions 302–306 are RNA binding; important for wobble base 34 recognition; the sequence is TRAAR. Residues cysteine 335, cysteine 337, cysteine 340, and histidine 366 each contribute to the Zn(2+) site.

The protein belongs to the queuine tRNA-ribosyltransferase family. As to quaternary structure, homodimer. Within each dimer, one monomer is responsible for RNA recognition and catalysis, while the other monomer binds to the replacement base PreQ1. The cofactor is Zn(2+).

It carries out the reaction 7-aminomethyl-7-carbaguanine + guanosine(34) in tRNA = 7-aminomethyl-7-carbaguanosine(34) in tRNA + guanine. It participates in tRNA modification; tRNA-queuosine biosynthesis. In terms of biological role, catalyzes the base-exchange of a guanine (G) residue with the queuine precursor 7-aminomethyl-7-deazaguanine (PreQ1) at position 34 (anticodon wobble position) in tRNAs with GU(N) anticodons (tRNA-Asp, -Asn, -His and -Tyr). Catalysis occurs through a double-displacement mechanism. The nucleophile active site attacks the C1' of nucleotide 34 to detach the guanine base from the RNA, forming a covalent enzyme-RNA intermediate. The proton acceptor active site deprotonates the incoming PreQ1, allowing a nucleophilic attack on the C1' of the ribose to form the product. After dissociation, two additional enzymatic reactions on the tRNA convert PreQ1 to queuine (Q), resulting in the hypermodified nucleoside queuosine (7-(((4,5-cis-dihydroxy-2-cyclopenten-1-yl)amino)methyl)-7-deazaguanosine). This is Queuine tRNA-ribosyltransferase from Protochlamydia amoebophila (strain UWE25).